Reading from the N-terminus, the 827-residue chain is Villin-1 (827 aa).

Residues 1–126 (MTKLNAQVKG…IRKGGVASGM (126 aa)) are necessary for homodimerization. The interval 1–734 (MTKLNAQVKG…YEDLKAELGN (734 aa)) is core. The Gelsolin-like 1 repeat unit spans residues 28 to 107 (QMVPVSSSTY…EVQGNESEAF (80 aa)). 2 LPA/PIP2-binding site regions span residues 112 to 119 (KQGIVIRK) and 138 to 146 (RLLHVKGKR). 2 Gelsolin-like repeats span residues 148 to 216 (VVAG…GEDE) and 269 to 342 (EVAT…SAVF). Residue Ser366 is modified to Phosphoserine. Gelsolin-like repeat units follow at residues 409–489 (DLVP…PHLM), 528–595 (TKAF…ANFW), and 634–707 (TEIP…PPTF). Phosphoserine is present on Ser735. Positions 761–827 (SGPLPIFPLE…QNLKKEKGLF (67 aa)) constitute an HP domain. The LPA/PIP2-binding site 3 stretch occupies residues 816–824 (KQQNLKKEK).

It belongs to the villin/gelsolin family. In terms of assembly, monomer. Homodimer; homodimerization is necessary for actin-bundling. Associates with F-actin; phosphorylation at tyrosine residues decreases the association with F-actin. Interacts (phosphorylated at C-terminus tyrosine phosphorylation sites) with PLCG1 (via the SH2 domains). Interacts (phosphorylated form) with PLCG1; the interaction is enhanced by hepatocyte growth factor (HGF). In terms of processing, phosphorylated on tyrosine residues by SRC. The unphosphorylated form increases the initial rate of actin-nucleating activity, whereas the tyrosine-phosphorylated form inhibits actin-nucleating activity, enhances actin-bundling activity and enhances actin-severing activity by reducing high Ca(2+) requirements. The tyrosine-phosphorylated form does not regulate actin-capping activity. Tyrosine phosphorylation is essential for cell migration: tyrosine phosphorylation sites in the N-terminus half regulate actin reorganization and cell morphology, whereas tyrosine phosphorylation sites in the C-terminus half regulate cell migration. Tyrosine phosphorylation is induced by epidermal growth factor (EGF) and stimulates cell migration.

It localises to the cytoplasm. The protein localises to the cytoskeleton. It is found in the cell projection. The protein resides in the lamellipodium. Its subcellular location is the ruffle. It localises to the microvillus. The protein localises to the filopodium tip. It is found in the filopodium. Epithelial cell-specific Ca(2+)-regulated actin-modifying protein that modulates the reorganization of microvillar actin filaments. Plays a role in the actin nucleation, actin filament bundle assembly, actin filament capping and severing. Binds phosphatidylinositol 4,5-bisphosphate (PIP2) and lysophosphatidic acid (LPA); binds LPA with higher affinity than PIP2. Binding to LPA increases its phosphorylation by SRC and inhibits all actin-modifying activities. Binding to PIP2 inhibits actin-capping and -severing activities but enhances actin-bundling activity. Regulates the intestinal epithelial cell morphology, cell invasion, cell migration and apoptosis. Protects against apoptosis induced by dextran sodium sulfate (DSS) in the gastrointestinal epithelium. Appears to regulate cell death by maintaining mitochondrial integrity. Enhances hepatocyte growth factor (HGF)-induced epithelial cell motility, chemotaxis and wound repair. The chain is Villin-1 (VIL1) from Sus scrofa (Pig).